The chain runs to 1048 residues: Probable histidine kinase 2 (1048 aa).

The Cytoplasmic portion of the chain corresponds to 1–16; it reads MREVEEVSKWRRRCCY. A helical transmembrane segment spans residues 17-37; the sequence is FWILFPLAVIATCMTITVVTF. Over 38-336 the chain is Extracellular; sequence CSSTMYMTEV…AMVGVFRRGG (299 aa). The chain crosses the membrane as a helical span at residues 337 to 357; it reads VTMVAVACAAAAAATVACVLM. The Cytoplasmic segment spans residues 358–1048; the sequence is ARALRRAVAR…AVHGVCKGKN (691 aa). The region spanning 398 to 662 is the Histidine kinase domain; it reads SASHDIRSAL…CFGFNVLLKT (265 aa). Histidine 401 is modified (phosphohistidine; by autocatalysis). The Response regulatory domain maps to 912-1044; that stretch reads HVLLVEDTLV…RIVEAVHGVC (133 aa). 4-aspartylphosphate is present on aspartate 975.

Activation probably requires a transfer of a phosphate group between a His in the transmitter domain and an Asp of the receiver domain.

It localises to the cell membrane. The catalysed reaction is ATP + protein L-histidine = ADP + protein N-phospho-L-histidine.. Functionally, cytokinin receptor related to bacterial two-component regulators. Functions as a histidine kinase and transmits the stress signal to a downstream MAPK cascade. The sequence is that of Probable histidine kinase 2 from Oryza sativa subsp. indica (Rice).